A 255-amino-acid chain; its full sequence is Electron transfer flavoprotein subunit beta (255 aa).

At Ala2 the chain carries N-acetylalanine. AMP-binding positions include Ala9, 39–42 (NPFC), Cys66, and 123–134 (GKQAIDDDCNQT). A recognition loop region spans residues 183–205 (ADLRLNEPRYATLPNIMKAKKKK). N6,N6,N6-trimethyllysine; by ETFBKMT; alternate is present on Lys200. At Lys200 the chain carries N6-acetyllysine; alternate. At Lys200 the chain carries N6-methyllysine; alternate. Lys203 is subject to N6,N6,N6-trimethyllysine; by ETFBKMT. Lys210 is subject to N6-acetyllysine; alternate. N6-succinyllysine; alternate is present on Lys210. Residues Ser223 and Ser226 each carry the phosphoserine modification. Lys238 bears the N6-acetyllysine mark. Position 248 is an N6-acetyllysine; alternate (Lys248). Lys248 is modified (N6-succinyllysine; alternate).

It belongs to the ETF beta-subunit/FixA family. In terms of assembly, heterodimer composed of ETFA and ETFB. Identified in a complex that contains ETFA, ETFB and ETFRF1. Interacts with ACADM. Methylated. Trimethylation at Lys-200 and Lys-203 may negatively regulate the activity in electron transfer from acyl-CoA dehydrogenases.

It is found in the mitochondrion matrix. Its function is as follows. Heterodimeric electron transfer flavoprotein that accepts electrons from several mitochondrial dehydrogenases, including acyl-CoA dehydrogenases, glutaryl-CoA and sarcosine dehydrogenase. It transfers the electrons to the main mitochondrial respiratory chain via ETF-ubiquinone oxidoreductase. Required for normal mitochondrial fatty acid oxidation and normal amino acid metabolism. ETFB binds an AMP molecule that probably has a purely structural role. The polypeptide is Electron transfer flavoprotein subunit beta (Pongo abelii (Sumatran orangutan)).